Reading from the N-terminus, the 544-residue chain is Chaperonin GroEL (544 aa).

ATP is bound by residues 29–32 (TLGP), 86–90 (DGTTT), Gly-413, 478–480 (NAA), and Asp-494.

This sequence belongs to the chaperonin (HSP60) family. Forms a cylinder of 14 subunits composed of two heptameric rings stacked back-to-back. Interacts with the co-chaperonin GroES.

Its subcellular location is the cytoplasm. The enzyme catalyses ATP + H2O + a folded polypeptide = ADP + phosphate + an unfolded polypeptide.. Together with its co-chaperonin GroES, plays an essential role in assisting protein folding. The GroEL-GroES system forms a nano-cage that allows encapsulation of the non-native substrate proteins and provides a physical environment optimized to promote and accelerate protein folding. This is Chaperonin GroEL from Lysinibacillus sphaericus (strain C3-41).